A 93-amino-acid polypeptide reads, in one-letter code: Protein S100-A8 (93 aa).

EF-hand domains are found at residues 12–47 and 46–81; these read IIDV…QYIR and IRKK…MGVA. Zn(2+) contacts are provided by H17 and H27. D33 lines the Ca(2+) pocket. The residue at position 42 (C42) is an S-nitrosocysteine. D59, N61, D63, and E70 together coordinate Ca(2+). The Zn(2+) site is built by H83 and H87.

This sequence belongs to the S-100 family. As to quaternary structure, homodimer. Preferentially exists as a heterodimer or heterotetramer with S100A9 known as calprotectin (S100A8/A9). S100A8 interacts with AGER, ATP2A2 and with the heterodimeric complex formed by TLR4 and LY96. Interacts with GAPDH. Calprotectin (S100A8/9) interacts with CEACAM3 and tubulin filaments in a calcium-dependent manner. Heterotetrameric calprotectin (S100A8/A9) interacts with ANXA6 and associates with tubulin filaments in activated monocytes. S100A8 and calprotectin (S100A8/9) interact with NCF2/P67PHOX, RAC1 and RAC2. Calprotectin (S100A8/9) interacts with CYBA and CYBB. Calprotectin (S100A8/9) interacts with NOS2 to form the iNOS-S100A8/A9 transnitrosylase complex; induced by LDL(ox). Calprotectin (S100A8/9) interacts with CD69. In terms of tissue distribution, calprotectin (S100A8/9) is predominantly expressed in myeloid cells. Except for inflammatory conditions, the expression is restricted to a specific stage of myeloid differentiation since both proteins are expressed in circulating neutrophils and monocytes but are absent in normal tissue macrophages and lymphocytes. Under chronic inflammatory conditions, such as psoriasis and malignant disorders, also expressed in the epidermis. Found in high concentrations at local sites of inflammation or in the serum of patients with inflammatory diseases such as rheumatoid, cystic fibrosis, inflammatory bowel disease, Crohn's disease, giant cell arteritis, cystic fibrosis, Sjogren's syndrome, systemic lupus erythematosus, and progressive systemic sclerosis. Involved in the formation and deposition of amyloids in the aging prostate known as corpora amylacea inclusions. Strongly up-regulated in many tumors, including gastric, esophageal, colon, pancreatic, bladder, ovarian, thyroid, breast and skin cancers.

Its subcellular location is the secreted. It is found in the cytoplasm. The protein localises to the cytoskeleton. The protein resides in the cell membrane. Calprotectin (S100A8/A9) activity on TLR4 signaling is inhibited by paquinimod. Its function is as follows. S100A8 is a calcium- and zinc-binding protein which plays a prominent role in the regulation of inflammatory processes and immune response. It can induce neutrophil chemotaxis and adhesion. Predominantly found as calprotectin (S100A8/A9) which has a wide plethora of intra- and extracellular functions. The intracellular functions include: facilitating leukocyte arachidonic acid trafficking and metabolism, modulation of the tubulin-dependent cytoskeleton during migration of phagocytes and activation of the neutrophilic NADPH-oxidase. Also participates in regulatory T-cell differentiation together with CD69. Activates NADPH-oxidase by facilitating the enzyme complex assembly at the cell membrane, transferring arachidonic acid, an essential cofactor, to the enzyme complex and S100A8 contributes to the enzyme assembly by directly binding to NCF2/P67PHOX. The extracellular functions involve pro-inflammatory, antimicrobial, oxidant-scavenging and apoptosis-inducing activities. Its pro-inflammatory activity includes recruitment of leukocytes, promotion of cytokine and chemokine production, and regulation of leukocyte adhesion and migration. Acts as an alarmin or a danger associated molecular pattern (DAMP) molecule and stimulates innate immune cells via binding to pattern recognition receptors such as Toll-like receptor 4 (TLR4) and receptor for advanced glycation endproducts (AGER). Binding to TLR4 and AGER activates the MAP-kinase and NF-kappa-B signaling pathways resulting in the amplification of the pro-inflammatory cascade. Has antimicrobial activity towards bacteria and fungi and exerts its antimicrobial activity probably via chelation of Zn(2+) which is essential for microbial growth. Can induce cell death via autophagy and apoptosis and this occurs through the cross-talk of mitochondria and lysosomes via reactive oxygen species (ROS) and the process involves BNIP3. Can regulate neutrophil number and apoptosis by an anti-apoptotic effect; regulates cell survival via ITGAM/ITGB and TLR4 and a signaling mechanism involving MEK-ERK. Its role as an oxidant scavenger has a protective role in preventing exaggerated tissue damage by scavenging oxidants. Can act as a potent amplifier of inflammation in autoimmunity as well as in cancer development and tumor spread. The iNOS-S100A8/A9 transnitrosylase complex directs selective inflammatory stimulus-dependent S-nitrosylation of GAPDH and probably multiple targets such as ANXA5, EZR, MSN and VIM by recognizing a [IL]-x-C-x-x-[DE] motif; S100A8 seems to contribute to S-nitrosylation site selectivity. Functionally, (Microbial infection) Upon infection by human coronavirus SARS-CoV-2, may induce expansion of aberrant immature neutrophils in a TLR4-dependent manner. The sequence is that of Protein S100-A8 from Homo sapiens (Human).